The following is a 190-amino-acid chain: UPF0301 protein Psyr_0485 (190 aa).

This sequence belongs to the UPF0301 (AlgH) family.

The chain is UPF0301 protein Psyr_0485 from Pseudomonas syringae pv. syringae (strain B728a).